We begin with the raw amino-acid sequence, 660 residues long: Pescadillo homolog (660 aa).

Disordered stretches follow at residues 313–358 (VESD…SYSS) and 471–660 (PELY…EKKA). The span at 331–342 (EEKPSDAIDKFE) shows a compositional bias: basic and acidic residues. Residues 360 to 476 (DPAQLFSRLT…ELKSPELYGP (117 aa)) form the BRCT domain. Residues 501-659 (LEEQQSEGEA…KRRRLEKEKK (159 aa)) are a coiled coil. Over residues 504–566 (QQSEGEAIDA…EEGSEDEEES (63 aa)) the composition is skewed to acidic residues. The segment covering 584–619 (VKGDKKMDAKTKAKLEAKKALERKKKSEAEDLERAK) has biased composition (basic and acidic residues).

It belongs to the pescadillo family. Component of the NOP7 complex, composed of ERB1, NOP7 and YTM1. The complex is held together by ERB1, which interacts with NOP7 via its N-terminal domain and with YTM1 via a high-affinity interaction between the seven-bladed beta-propeller domains of the 2 proteins. The NOP7 complex associates with the 66S pre-ribosome.

The protein resides in the nucleus. It localises to the nucleolus. It is found in the nucleoplasm. In terms of biological role, component of the NOP7 complex, which is required for maturation of the 25S and 5.8S ribosomal RNAs and formation of the 60S ribosome. This is Pescadillo homolog from Chaetomium globosum (strain ATCC 6205 / CBS 148.51 / DSM 1962 / NBRC 6347 / NRRL 1970) (Soil fungus).